A 785-amino-acid chain; its full sequence is Neutral ceramidase (785 aa).

An N-terminal signal peptide occupies residues 1 to 35; that stretch reads MEASSWLCYQARGFGSSRVWLWLLLALVLLNCSLV. The N-linked (GlcNAc...) asparagine glycan is linked to Asn31. The active-site Nucleophile is Ser359. N-linked (GlcNAc...) asparagine glycosylation is found at Asn377, Asn675, and Asn685.

This sequence belongs to the neutral ceramidase family. As to expression, expressed in seedlings, with higher levels in roots than in shoots.

It is found in the secreted. The protein localises to the endoplasmic reticulum. The protein resides in the golgi apparatus. It carries out the reaction an N-acylsphing-4-enine + H2O = sphing-4-enine + a fatty acid. Enhanced activity in the presence of calcium, magnesium, manganese and zinc ions, but inhibited activity in the presence of iron ion. Functionally, hydrolyzes the sphingolipid ceramide into sphingosine and free fatty acid. Uses ceramide instead of phytoceramide as substrate. The chain is Neutral ceramidase from Oryza sativa subsp. japonica (Rice).